We begin with the raw amino-acid sequence, 335 residues long: Acetyl-coenzyme A carboxylase carboxyl transferase subunit alpha (335 aa).

The region spanning 48–308 is the CoA carboxyltransferase C-terminal domain; the sequence is TLEKKVEALR…KGILIEELSA (261 aa).

It belongs to the AccA family. As to quaternary structure, acetyl-CoA carboxylase is a heterohexamer composed of biotin carboxyl carrier protein (AccB), biotin carboxylase (AccC) and two subunits each of ACCase subunit alpha (AccA) and ACCase subunit beta (AccD).

It localises to the cytoplasm. It catalyses the reaction N(6)-carboxybiotinyl-L-lysyl-[protein] + acetyl-CoA = N(6)-biotinyl-L-lysyl-[protein] + malonyl-CoA. It participates in lipid metabolism; malonyl-CoA biosynthesis; malonyl-CoA from acetyl-CoA: step 1/1. Functionally, component of the acetyl coenzyme A carboxylase (ACC) complex. First, biotin carboxylase catalyzes the carboxylation of biotin on its carrier protein (BCCP) and then the CO(2) group is transferred by the carboxyltransferase to acetyl-CoA to form malonyl-CoA. The sequence is that of Acetyl-coenzyme A carboxylase carboxyl transferase subunit alpha from Chlorobium phaeovibrioides (strain DSM 265 / 1930) (Prosthecochloris vibrioformis (strain DSM 265)).